The primary structure comprises 369 residues: Dual specificity protein phosphatase 1-A (369 aa).

The region spanning 21 to 138 (RAHKCLILDC…FSAQCPEFCT (118 aa)) is the Rhodanese domain. At threonine 168 the chain carries Phosphothreonine; by MAPK1. A Tyrosine-protein phosphatase domain is found at 175–316 (GPVEILPFLY…LLQFESQVLA (142 aa)). Cysteine 260 functions as the Phosphocysteine intermediate in the catalytic mechanism.

Belongs to the protein-tyrosine phosphatase family. Non-receptor class dual specificity subfamily. Phosphorylated by MAPK1/ERK2 at Thr-168 and at one or more serine residues in a progesterone-dependent manner. Phosphorylation reduces its rate of degradation but does not seem to affect phosphatase activity. In terms of tissue distribution, expressed in XIK-2 kidney cells.

It localises to the nucleus. It catalyses the reaction O-phospho-L-seryl-[protein] + H2O = L-seryl-[protein] + phosphate. It carries out the reaction O-phospho-L-threonyl-[protein] + H2O = L-threonyl-[protein] + phosphate. The catalysed reaction is O-phospho-L-tyrosyl-[protein] + H2O = L-tyrosyl-[protein] + phosphate. Functionally, dual specificity phosphatase that dephosphorylates MAP kinase MAPK1/ERK2 on both 'Thr-188' and 'Tyr-190', regulating its activity during the meiotic cell cycle. The protein is Dual specificity protein phosphatase 1-A of Xenopus laevis (African clawed frog).